The following is a 372-amino-acid chain: Solute carrier family 35 member F6 (372 aa).

The signal sequence occupies residues 1–18; sequence MAWTKYQLFLAGLMLVTG. Helical transmembrane passes span 48 to 68 and 89 to 109; these read FVQA…FYLL and LLFL…YVAL. Residues 105–160 enclose the EamA domain; that stretch reads MYVALNMTSASSFQMLRGAVIIFTGLFSVAFLDRRLVPSQWLGILITIAGLVVVGL. Residue asparagine 110 is glycosylated (N-linked (GlcNAc...) asparagine). Helical transmembrane passes span 116-136, 145-165, 176-196, 211-231, 261-281, 293-312, and 320-336; these read SFQM…VAFL, WLGI…DLLS, VITG…QMVL, AVGI…VPMY, LIAL…FSGI, MVLD…ALGW, and ILGF…YNGL. Threonine 366 is modified (phosphothreonine).

Belongs to the SLC35F solute transporter family. Interacts with SLC25A5.

Its subcellular location is the mitochondrion. It is found in the lysosome membrane. Functionally, involved in the maintenance of mitochondrial membrane potential in pancreatic ductal adenocarcinoma (PDAC) cells. Promotes pancreatic ductal adenocarcinoma (PDAC) cell growth. May play a role as a nucleotide-sugar transporter. The polypeptide is Solute carrier family 35 member F6 (Slc35f6) (Rattus norvegicus (Rat)).